The chain runs to 926 residues: Vacuolar protein sorting-associated protein 39 homolog (926 aa).

In terms of domain architecture, CNH spans Pro15–Gln306. One copy of the CHCR repeat lies at Asp590–Gln768.

This sequence belongs to the VAM6/VPS39 family. Probable core component of the homotypic fusion and vacuole protein sorting (HOPS) complex consisting of the core class C Vps proteins vps-11, vps-16, vps-18, and which further associates with vps-33.1, vps-39 and vps-41. May interact with lgg-2. Interacts with cuti-1.

Its subcellular location is the cytoplasm. It localises to the lysosome membrane. The protein localises to the late endosome membrane. It is found in the late endosome. The protein resides in the lysosome. Its function is as follows. Plays a role in vesicle-mediated protein trafficking to lysosomal compartments including the endocytic membrane transport and autophagic pathways. Believed to act in part as a component of the putative HOPS endosomal tethering complex which is proposed to be involved in the rab-5-to-rab-7 endosome conversion probably implicating sand-1, and via binding SNAREs and SNARE complexes to mediate tethering and docking events during SNARE-mediated membrane fusion. The HOPS complex is proposed to be recruited to rab-7 on the late endosomal membrane and to regulate late endocytic, phagocytic and autophagic traffic towards lysosomes. Involved in homotypic vesicle fusions between late endosomes and in heterotypic fusions between late endosomes and lysosomes. Required for fusion of endosomes. In association with lgg-2 mediates the tethering of autophagosomes with lysosomes to form autolysosomes. Within the HOPS complex, contributes to the normal development of gut granules in embryonic and adult intestinal cells. This chain is Vacuolar protein sorting-associated protein 39 homolog, found in Caenorhabditis elegans.